The sequence spans 259 residues: DNA adenine methylase (259 aa).

Residues Y7, K11, D50, and D171 each contribute to the S-adenosyl-L-methionine site.

It belongs to the N(4)/N(6)-methyltransferase family. As to quaternary structure, monomer.

The catalysed reaction is a 2'-deoxyadenosine in DNA + S-adenosyl-L-methionine = an N(6)-methyl-2'-deoxyadenosine in DNA + S-adenosyl-L-homocysteine + H(+). An alpha subtpe methyltransferase that recognizes the double-stranded sequence 5'-GATC-3' and methylates A-2 on both strands. May prevent degradation of viral DNA by the host restriction-modification antiviral defense system. This is DNA adenine methylase from Enterobacteria phage T2 (Bacteriophage T2).